The sequence spans 435 residues: 3-phosphoshikimate 1-carboxyvinyltransferase (435 aa).

Positions 15, 16, and 20 each coordinate 3-phosphoshikimate. K15 serves as a coordination point for phosphoenolpyruvate. Phosphoenolpyruvate is bound by residues G96 and R124. 3-phosphoshikimate-binding residues include S169, Q171, T195, D319, and K346. Residue Q171 participates in phosphoenolpyruvate binding. Catalysis depends on D319, which acts as the Proton acceptor. Residues R350 and R394 each coordinate phosphoenolpyruvate.

The protein belongs to the EPSP synthase family. Monomer.

The protein resides in the cytoplasm. It catalyses the reaction 3-phosphoshikimate + phosphoenolpyruvate = 5-O-(1-carboxyvinyl)-3-phosphoshikimate + phosphate. It participates in metabolic intermediate biosynthesis; chorismate biosynthesis; chorismate from D-erythrose 4-phosphate and phosphoenolpyruvate: step 6/7. Catalyzes the transfer of the enolpyruvyl moiety of phosphoenolpyruvate (PEP) to the 5-hydroxyl of shikimate-3-phosphate (S3P) to produce enolpyruvyl shikimate-3-phosphate and inorganic phosphate. The protein is 3-phosphoshikimate 1-carboxyvinyltransferase of Chloroherpeton thalassium (strain ATCC 35110 / GB-78).